The following is a 250-amino-acid chain: Probable chemoreceptor glutamine deamidase CheD (250 aa).

This sequence belongs to the CheD family.

The catalysed reaction is L-glutaminyl-[protein] + H2O = L-glutamyl-[protein] + NH4(+). Functionally, probably deamidates glutamine residues to glutamate on methyl-accepting chemotaxis receptors (MCPs), playing an important role in chemotaxis. The chain is Probable chemoreceptor glutamine deamidase CheD from Paraburkholderia xenovorans (strain LB400).